The following is a 122-amino-acid chain: Probable glycine cleavage system H protein (122 aa).

The Lipoyl-binding domain maps to 23–104; the sequence is IATVGITDYA…PYGNWLVKMK (82 aa). Lysine 64 carries the post-translational modification N6-lipoyllysine.

This sequence belongs to the GcvH family. The glycine cleavage system is composed of four proteins: P, T, L and H. The cofactor is (R)-lipoate.

In terms of biological role, the glycine cleavage system catalyzes the degradation of glycine. The H protein shuttles the methylamine group of glycine from the P protein to the T protein. The sequence is that of Probable glycine cleavage system H protein from Thermoplasma volcanium (strain ATCC 51530 / DSM 4299 / JCM 9571 / NBRC 15438 / GSS1).